We begin with the raw amino-acid sequence, 1486 residues long: Chromosome partition protein MukB (1486 aa).

34 to 41 (GGNGAGKS) serves as a coordination point for ATP. Coiled-coil stretches lie at residues 326 to 418 (LEAD…QYNQ), 444 to 480 (LETF…QAYQ), and 509 to 603 (RHLA…RAPV). The segment at 666–783 (PGGSEDQRLN…EVPLFGRAAR (118 aa)) is flexible hinge. Coiled coils occupy residues 835–923 (EAEI…AKLE), 977–1115 (EMLS…TAKA), and 1209–1266 (VEAI…QNVS).

Belongs to the SMC family. MukB subfamily. In terms of assembly, homodimerization via its hinge domain. Binds to DNA via its C-terminal region. Interacts, and probably forms a ternary complex, with MukE and MukF via its C-terminal region. The complex formation is stimulated by calcium or magnesium. Interacts with tubulin-related protein FtsZ.

It is found in the cytoplasm. Its subcellular location is the nucleoid. In terms of biological role, plays a central role in chromosome condensation, segregation and cell cycle progression. Functions as a homodimer, which is essential for chromosome partition. Involved in negative DNA supercoiling in vivo, and by this means organize and compact chromosomes. May achieve or facilitate chromosome segregation by condensation DNA from both sides of a centrally located replisome during cell division. In Escherichia coli O6:K15:H31 (strain 536 / UPEC), this protein is Chromosome partition protein MukB.